The primary structure comprises 473 residues: Probable dipeptidase (473 aa).

Residue C10 is part of the active site.

It belongs to the peptidase C69 family.

It catalyses the reaction an L-aminoacyl-L-amino acid + H2O = 2 an L-alpha-amino acid. In Latilactobacillus sakei (Lactobacillus sakei), this protein is Probable dipeptidase.